The following is a 188-amino-acid chain: Nicotinamide/nicotinic acid mononucleotide adenylyltransferase (188 aa).

The protein belongs to the archaeal NMN adenylyltransferase family.

It catalyses the reaction beta-nicotinamide D-ribonucleotide + ATP + H(+) = diphosphate + NAD(+). It carries out the reaction nicotinate beta-D-ribonucleotide + ATP + H(+) = deamido-NAD(+) + diphosphate. Its pathway is cofactor biosynthesis; NAD(+) biosynthesis; NAD(+) from nicotinamide D-ribonucleotide: step 1/1. It participates in cofactor biosynthesis; NAD(+) biosynthesis; deamido-NAD(+) from nicotinate D-ribonucleotide: step 1/1. Functionally, dual substrate specificity enzyme that catalyzes the formation of NAD(+) from nicotinamide mononucleotide (NMN) and the formation of deamido-NAD(+) (NaAD) from nicotinate mononucleotide (NaMN). Shows nearly identical catalytic efficiency for both physiological substrates. Plays an essential role in all three routes of NAD biogenesis, de novo synthesis as well as the deamidating and nondeamidating salvage pathways. This Acinetobacter baylyi (strain ATCC 33305 / BD413 / ADP1) protein is Nicotinamide/nicotinic acid mononucleotide adenylyltransferase.